Here is a 927-residue protein sequence, read N- to C-terminus: Clumping factor A (927 aa).

The signal sequence occupies residues 1 to 39; that stretch reads MNMKKKEKHAIRKKSIGVASVLVGTLIGFGLLSSKEADA. The YSIRK-G/S signaling motif motif lies at 9–20; that stretch reads HAIRKKSIGVAS. 2 disordered regions span residues 34-200 and 529-898; these read SKEA…SNKD and FNNG…SEDE. The segment at 40–542 is ligand binding A region; that stretch reads SENSVTQSDS…SGSGDGIDKP (503 aa). Residues 47–65 show a composition bias toward low complexity; it reads SDSASNESKSNDSSSVSAA. Over residues 71–105 the composition is skewed to polar residues; sequence TNVSDTKTSSNTNNGETSVAQNPAQQETTQSSSTN. 2 stretches are compositionally biased toward low complexity: residues 106-132 and 143-162; these read ATTEETPVTGEATTTTTNQANTPATTQ and NQTSNETTSNDTNTVSSVNS. Residues 163 to 200 show a composition bias toward polar residues; sequence PQNSTNAENVSTTQDTSTEATPSNNESAPQSTDASNKD. Over residues 547–565 the composition is skewed to acidic residues; it reads QPDEPGEIEPIPEDSDSDP. Residues 566-598 show a composition bias toward low complexity; the sequence is GSDSGSDSNSDSGSDSGSDSTSDSGSDSASDSD. The span at 599 to 855 shows a compositional bias: acidic residues; sequence SASDSDSASD…DSDSESDSNS (257 aa). The segment covering 856–867 has biased composition (low complexity); the sequence is DSESVSNNNVVP. The segment covering 881–890 has biased composition (basic and acidic residues); that stretch reads NEAKDSKEPL. Residues 890 to 894 carry the LPXTG sorting signal motif; it reads LPDTG. Position 893 is a pentaglycyl murein peptidoglycan amidated threonine (Thr893). Positions 894 to 927 are cleaved as a propeptide — removed by sortase; the sequence is GSEDEANTSLIWGLLASIGSLLLFRRKKENKDKK.

The protein belongs to the serine-aspartate repeat-containing protein (SDr) family.

It localises to the secreted. Its subcellular location is the cell wall. Its function is as follows. Cell surface-associated protein implicated in virulence. Promotes bacterial attachment exclusively to the gamma-chain of human fibrinogen. Induces formation of bacterial clumps, which diminish the ability of group IIA phospholipase A2 to cause bacterial phospholipid hydrolysis and killing. Significantly decreases macrophage phagocytosis possibly thanks to the clumps, clumped bacteria being too large to be phagocytosed. Dominant factor responsible for human platelet aggregation, which may be an important mechanism for initiating infective endocarditis. Enhances spleen cell proliferative response in vitro, contributing significantly to the immunostimulatory activity of S.aureus. The protein is Clumping factor A (clfA) of Staphylococcus aureus (strain NCTC 8325 / PS 47).